A 3625-amino-acid polypeptide reads, in one-letter code: Spectinabilin polyketide synthase system protein NorA' (3625 aa).

The Ketosynthase family 3 (KS3) 1 domain occupies 33–459 (REPVAVVSMA…GTNAHVILEQ (427 aa)). Active-site for beta-ketoacyl synthase 1 activity residues include C206, H341, and H381. Positions 564 to 881 (LVFPGQGSQW…SLGELFAGGR (318 aa)) constitute a Malonyl-CoA:ACP transacylase (MAT) 1 domain. Positions 930 to 1054 (HPWWGAVTEL…GTLTRTARPA (125 aa)) are N-terminal hotdog fold 1. In terms of domain architecture, PKS/mFAS DH 1 spans 930-1200 (HPWWGAVTEL…VRPLTPGSGA (271 aa)). The active-site Proton acceptor; for dehydratase activity 1 is the H962. The C-terminal hotdog fold 1 stretch occupies residues 1066 to 1200 (ADPLPVDRIY…VRPLTPGSGA (135 aa)). D1125 serves as the catalytic Proton donor; for dehydratase activity 1. The region spanning 1443-1620 (GTVLVTGAAG…LSLAWGLWAE (178 aa)) is the Ketoreductase (KR) 1 domain. The Carrier 1 domain occupies 1722–1797 (GAVLETVRAQ…SLAAHLLGRL (76 aa)). Position 1757 is an O-(pantetheine 4'-phosphoryl)serine (S1757). The Ketosynthase family 3 (KS3) 2 domain maps to 1815–2231 (DEPIAIIGMA…GTNAHVVLEQ (417 aa)). Residues C1978, H2113, and H2153 each act as for beta-ketoacyl synthase 2 activity in the active site. Residues 2336–2656 (VFVFPGQGAQ…VAEAHTRGIA (321 aa)) form the Malonyl-CoA:ACP transacylase (MAT) 2 domain. The N-terminal hotdog fold 2 stretch occupies residues 2704 to 2829 (HPLLGARMEL…GLLSEEEPAT (126 aa)). A PKS/mFAS DH 2 domain is found at 2704–2981 (HPLLGARMEL…ARPVPAGQLR (278 aa)). H2736 functions as the Proton acceptor; for dehydratase activity 2 in the catalytic mechanism. Residues 2842 to 2981 (AEPIELVGFY…ARPVPAGQLR (140 aa)) form a C-terminal hotdog fold 2 region. D2903 (proton donor; for dehydratase activity 2) is an active-site residue. Positions 3182 to 3361 (GTVLITGASG…QSLAWGLWSE (180 aa)) constitute a Ketoreductase (KR) 2 domain. The Carrier 2 domain maps to 3462 to 3537 (RQLTDLVRAQ…ALAGHLSTRL (76 aa)). At S3497 the chain carries O-(pantetheine 4'-phosphoryl)serine.

The spectinabilin polyketide synthase complex is composed of 4 proteins, NorA, NorA', NorB and NorC. The complex comprises 6 modules with a total of 28 catalytic domains catalyzing 7 chain elongations. NorA comprises one module, NorA' two modules, NorB one module and NorC two modules. The cofactor is pantetheine 4'-phosphate.

It catalyses the reaction 4-nitrobenzoyl-CoA + 6 (S)-methylmalonyl-CoA + malonyl-CoA + 6 NADPH + 12 H(+) = demethyldeoxyspectinabilin + 7 CO2 + 6 NADP(+) + 8 CoA + 5 H2O. Its pathway is antibiotic biosynthesis. The protein operates within polyketide biosynthesis. Its function is as follows. Component of a type I modular polyketide synthase (PKS) that generates the backbone of the antibiotic spectinabilin (also known as neoaureothin), a nitroaryl-substituted polyketide metabolite. This PKS system accepts the unusual starter unit 4-nitrobenzoyl-CoA and extends it by 6 molecules of (S)-methylmalonyl-CoA and a single molecule of malonyl-CoA. This chain is Spectinabilin polyketide synthase system protein NorA', found in Streptomyces orinoci (Streptoverticillium orinoci).